Consider the following 242-residue polypeptide: GDSL esterase/lipase At5g62930 (242 aa).

Ser11 (nucleophile) is an active-site residue. A disordered region spans residues 223 to 242; the sequence is PHHSHIDGKNPSKAFEERCL.

The protein belongs to the 'GDSL' lipolytic enzyme family.

The chain is GDSL esterase/lipase At5g62930 from Arabidopsis thaliana (Mouse-ear cress).